Reading from the N-terminus, the 297-residue chain is uncharacterized protein (297 aa).

Disordered regions lie at residues 19–133, 147–214, and 226–277; these read NEVD…EEKE, AEDD…VGIA, and EKTS…SKEA. Basic and acidic residues predominate over residues 41–52; sequence EEPKNEKEKHDD. Residues 77-87 are compositionally biased toward acidic residues; the sequence is PAEDDEEDEEF. A compositionally biased stretch (polar residues) spans 88-101; that stretch reads PSQSYGPSIPSNFR. Basic and acidic residues-rich tracts occupy residues 147-161 and 236-268; these read AEDDEKNFQPKREEW and IHQKKRDEKVKDAGYAQGERRPFDREKDMEVRG.

This is an uncharacterized protein from Caenorhabditis elegans.